The primary structure comprises 74 residues: Conotoxin Vc6.11 (74 aa).

The first 19 residues, 1–19 (MEKLTILLLVAAVLMSTQA), serve as a signal peptide directing secretion. Residues 20-41 (LIQEQRQKAKINLFSKRKPSAE) constitute a propeptide that is removed on maturation. Cystine bridges form between cysteine 55–cysteine 66 and cysteine 61–cysteine 71.

The protein belongs to the conotoxin O2 superfamily. As to expression, expressed by the venom duct.

It is found in the secreted. Functionally, inhibits voltage-gated ion channels. The sequence is that of Conotoxin Vc6.11 from Conus victoriae (Queen Victoria cone).